A 242-amino-acid polypeptide reads, in one-letter code: MASVSMRDMLTAGVHFGHQTRYWNPKMKQFIFGARNRVHIINLEKTVPMFNEALAELAKVGEKKGKVLFVGTKRAASESVKEAALASNQYYVNNRWLGGMLTNWKTVRQSIKRLKELEVQSTDGTFDKLTKKEALMRTREMEKLEKSLGGIKDMGGLPDALFVIDADHEHIAIKEANNLGIPVFAVVDTNSSPDGVDYIIPGNDDAIRAVQLYLNAAAQAINEGRNKDVAAVAEKDGFVEAE.

This sequence belongs to the universal ribosomal protein uS2 family.

The protein is Small ribosomal subunit protein uS2 of Vibrio cholerae serotype O1 (strain ATCC 39541 / Classical Ogawa 395 / O395).